Here is a 1379-residue protein sequence, read N- to C-terminus: DNA-directed RNA polymerase subunit beta (1379 aa).

Belongs to the RNA polymerase beta chain family. As to quaternary structure, in plastids the minimal PEP RNA polymerase catalytic core is composed of four subunits: alpha, beta, beta', and beta''. When a (nuclear-encoded) sigma factor is associated with the core the holoenzyme is formed, which can initiate transcription.

The protein resides in the plastid. The protein localises to the chloroplast. The catalysed reaction is RNA(n) + a ribonucleoside 5'-triphosphate = RNA(n+1) + diphosphate. Its function is as follows. DNA-dependent RNA polymerase catalyzes the transcription of DNA into RNA using the four ribonucleoside triphosphates as substrates. This is DNA-directed RNA polymerase subunit beta from Trieres chinensis (Marine centric diatom).